The sequence spans 519 residues: Circadian clock oscillator protein KaiC (519 aa).

In terms of domain architecture, KaiC 1 spans 1–247; that stretch reads MTSAEMTSPN…TITDHGINIF (247 aa). ATP-binding residues include Gly-49, Thr-50, Gly-51, Lys-52, Thr-53, and Leu-54. Position 53 (Thr-53) interacts with Mg(2+). Glu-77 functions as the Proton acceptor in CI (KaiC 1) in the catalytic mechanism. Position 89 (Ser-89) interacts with ATP. Positions 115 to 122 are B-loop, required to bind KaiB and SasA; that stretch reads QEVVGGFD. ATP is bound by residues Lys-224, Leu-225, Arg-226, Thr-228, His-230, Thr-240, and Asp-241. A linker region spans residues 248-260; it reads PLGAMRLTQRSSN. Residues 261–519 enclose the KaiC 2 domain; that stretch reads VRVSSGVVRL…RGVQEKGPES (259 aa). 7 residues coordinate ATP: Thr-290, Gly-291, Thr-292, Gly-293, Lys-294, Thr-295, and Leu-296. Position 295 (Thr-295) interacts with Mg(2+). Glu-318 lines the Mg(2+) pocket. The active-site Proton acceptor in CII (KaiC 2) is Glu-318. Trp-331 lines the ATP pocket. Phosphoserine; by autocatalysis is present on Ser-431. Residue Thr-432 is modified to Phosphothreonine; by autocatalysis. 7 residues coordinate ATP: Arg-451, Lys-457, Met-458, Arg-459, Ser-461, His-463, and Lys-465. The interval 488-497 is A-loop, interacts with KaiA; it reads RIISGSPTRI.

This sequence belongs to the KaiC family. As to quaternary structure, homohexamer resembling 2 stacked donuts with a central pore nearly blocked on one side; hexamerization is dependent on ATP-binding. Binds 12 ATP; 6 between each subunit in both layers. KaiB only binds to phospho-Ser-431 KaiC (not doubly phosphorylated KaiC). Complex formation between KaiB and KaiC is regulated by the phosphorylation state of KaiC and by an ATP hydrolysis-driven conformation change in the CI ring of KaiC; complex formation is slow. Slow complex formation is crucial for the timing of the circadian period. KaiB switches to a thioredoxin-like form called KaiB(fs) when bound to KaiC. The KaiABC complex composition changes during the circadian cycle to control KaiC phosphorylation. Complexes KaiC(6), KaiA(2-4):KaiC(6), KaiB(6):KaiC(6) and KaiC(6):KaiB(6):KaiA(12) are among the most important forms, many form cooperatively. Interacts directly with KaiB and SasA. The CI domain binds to KaiB and SasA; as they have a similar fold they compete for the same site on CI. CikA interacts with this protein in the clock complex. Binds to the C-terminus of KaiA via a coiled-coil structure. Forms KaiC(6):KaiB(1) and KaiC(6):KaiB(6) complexes. It depends on Mg(2+) as a cofactor. In terms of processing, has a 4 step phosphorylation cycle; the autokinase acts first on Thr-432, then Ser-431. When Ser-431 is modified KaiC switches to an autophosphatase mode, acting first on phospho-Thr-432 then phospho-Ser-431. Phosphorylated and dephosphorylated on serine/threonine residues by autocatalysis. Unphosphorylated, mono- and di-phosphorylated forms exist. The phosphorylated form correlates with clock speed. The presence of KaiA increases phosphorylation and stabilizes these forms. Phosphorylated on serine and threonine residues by autocatalysis. Has a 4 step phosphorylation cycle; the autokinase acts first on Thr-432, then Ser-431. When Ser-431 is modified KaiC switches to an autophosphatase mode, acting first on phospho-Thr-432 then phospho-Ser-431.

The enzyme catalyses L-seryl-[protein] + ATP = O-phospho-L-seryl-[protein] + ADP + H(+). It catalyses the reaction L-threonyl-[protein] + ATP = O-phospho-L-threonyl-[protein] + ADP + H(+). It carries out the reaction ATP + H2O = ADP + phosphate + H(+). Interaction with KaiA stimulates autophosphorylation, KaiC interaction with KaiB sequesters KaiA, preventing it stimulating the KaiC kinase, leading to autodephosphorylation. A KaiA dimer is sufficient to enhance KaiC phosphorylation. Interaction of KaiA with the A-loop stimulates autokinase activity. In terms of biological role, the KaiABC oscillator complex constitutes the main circadian regulator in cyanobacteria. Complex composition changes during the circadian cycle to control KaiC phosphorylation; KaiA stimulates KaiC autophosphorylation, while KaiB sequesters KaiA, leading to KaiC autodephosphorylation. The Kai complex controls chromosome condensation, leading to a transcription accessible chromosome during the first half of the circadian cycle and a compact, less transcription-accessible chromosome during the latter half. Clock output pathways impact the RpaA transcriptional regulator. Circadian oscillations can be generated in vitro by incubating KaiA, KaiB and KaiC with 1 mM ATP. The cycle is self-sustainable for at least 3 cycles and resistant to temperature changes. Mutations in KaiC alone prolong or reduce the circadian rhythm. A very robust clock is reconstituted with KaiA, KaiB, KaiC, SasA, CikA and RpaA; output is measured by transcription from an appropriate reporter. Functionally, the level of KaiC phosphorylation and KaiC ATPase activity represent the key features of the biochemical oscillator. KaiA homodimer binding to the KaiC CII domain stimulates KaiC's ATPase activity and forms KaiA(2-4):KaiC(6) complexes, which stimulate KaiC autophosphorylation first on Thr-432 then Ser-431. Phospho-Ser-431-KaiC accumulation triggers binding of KaiB to CI to form the KaiB(6):KaiC(6) complex, leading to changes in the output regulators CikA and SasA. KaiB(6):KaiC(6) formation exposes a site for KaiA binding that sequesters KaiA from the CII domain, making the KaiC(6):KaiB(6):KaiA(12) complex that results in KaiC autodephosphorylation. Complete dephosphorylation of KaiC leads to dissociation of KaiA(2):KaiB(1), completing 1 cycle of the Kai oscillator. Has a weak, temperature-independent ATPase activity (about 15 molecules of ATP per day); the addition of KaiA and KaiB increases activity slightly and makes the activity oscillate with a circadian period in vitro for over 60 hours. ATPase activity defines the circadian period. The phosphorylation state of KaiC modulates its ATPase activity and effects KaiB binding. Its function is as follows. There are several clock output pathways; SasA/RpaA, CikA/RpaA and LabA. KaiC enhances the autophosphorylation activity of SasA, which then transfers its phosphate group to RpaA to activate it. Phosphotransfer is maximal when KaiC phosphorylation is active during the circadian cycle. KaiB and KaiC together enhance the phosphatase activity of CikA on phospho-RpaA. In terms of biological role, kaiC is important for metabolic partitioning during the dark to light shift, modulating the balance between the Calvin cycle and oxidative pentose phosphate pathway under natural growth conditions. The polypeptide is Circadian clock oscillator protein KaiC (Synechococcus elongatus (strain ATCC 33912 / PCC 7942 / FACHB-805) (Anacystis nidulans R2)).